A 545-amino-acid chain; its full sequence is Cytochrome P450 monooxygenase 212 (545 aa).

An N-terminal signal peptide occupies residues 1-14 (MAAYAWLYCALALG). C486 is a heme binding site.

This sequence belongs to the cytochrome P450 family. It depends on heme as a cofactor.

Its pathway is secondary metabolite biosynthesis. Its function is as follows. Cytochrome P450 monooxygenase that is able to use anthracene and pyrene as substrates for oxidation. This chain is Cytochrome P450 monooxygenase 212, found in Postia placenta (strain ATCC 44394 / Madison 698-R) (Brown rot fungus).